The sequence spans 162 residues: Caveolin-2 (162 aa).

Residues 1–86 (MGLEKEKLEC…FELVKFIFYR (86 aa)) lie on the Cytoplasmic side of the membrane. The segment at residues 87-107 (LLTTLLAVPAAFILGVVFGVL) is an intramembrane region (helical). The Cytoplasmic segment spans residues 108–162 (SCIHIWLVMPVTRSFLMLLPSIQVVWKSVTDMFITPLFHSMGRSLSSIQVRTSDT).

Belongs to the caveolin family. As to quaternary structure, homooligomer.

The protein resides in the golgi apparatus membrane. It is found in the cell membrane. It localises to the membrane. Its subcellular location is the caveola. Its function is as follows. May act as a scaffolding protein within caveolar membranes. Interacts directly with G-protein alpha subunits and can functionally regulate their activity. In Takifugu rubripes (Japanese pufferfish), this protein is Caveolin-2 (cav2).